The primary structure comprises 1099 residues: Adenylate cyclase type 7 (1099 aa).

Over 1–33 the chain is Cytoplasmic; that stretch reads MPAKGRYFLNEGDEGPDQAALYEKYRLTSLHGP. 6 consecutive transmembrane segments (helical) span residues 34–54, 63–83, 95–117, 122–142, 147–167, and 178–198; these read LLLL…SIAF, QVVL…YVLV, ALAL…DSLE, AWEQ…LLPL, AIVA…AVTR, and LGLQ…TGAF. Topologically, residues 199–595 are cytoplasmic; the sequence is HKHQLQDASR…YRLVPIPRAR (397 aa). Residues Asp-286, Ile-287, and Asp-330 each coordinate Mg(2+). Residues 286-291, 328-330, and Arg-374 contribute to the ATP site; these read DIVGFT and LGD. Residues 456–476 form a disordered region; that stretch reads DPRSQQPPPPSHHLSKPKGDA. The mediates regulation of adenylate cyclase activity by C5 alpha-induced G- beta and gamma pathway stretch occupies residues 479–484; sequence KMRASV. The tract at residues 493–501 is mediates regulation of adenylate cyclase activity by sphingosine 1-phosphate-induced G alpha 13 pathway; sequence WGAARPFAH. The disordered stretch occupies residues 504–543; it reads HRESVSSSETPISNGRRQKAIPLRRHRAPDRSASPKGRLE. A compositionally biased stretch (polar residues) spans 508–518; sequence VSSSETPISNG. The modulates adenylate cyclase activity by modulating the binding of G(s)alpha to the high-affinity G(s)alpha binding site in 7C1a/7C2 stretch occupies residues 508 to 585; it reads VSSSETPISN…IFLEKGFERE (78 aa). The span at 519 to 531 shows a compositional bias: basic residues; that stretch reads RRQKAIPLRRHRA. Helical transmembrane passes span 596 to 616, 621 to 641, and 670 to 689; these read YDFA…LLVM, TLGV…SFCF, and LVLV…INMP. Asn-702 is a glycosylation site (N-linked (GlcNAc...) asparagine). Helical transmembrane passes span 719–738, 747–766, and 813–833; these read LLPY…SVFL, MLLT…SPCW, and DLKI…ILLS. The Cytoplasmic segment spans residues 834-1099; that stretch reads RQIDYYCRLD…TAKFQGLGLN (266 aa). Residues Lys-950, 1029–1031, 1036–1040, and Lys-1076 contribute to the ATP site; these read DIW and NVASR.

It belongs to the adenylyl cyclase class-4/guanylyl cyclase family. The cofactor is Mg(2+). Mn(2+) serves as cofactor. Phosphorylated by PRKCD. Most abundant in heart, spleen and lung.

The protein localises to the membrane. It catalyses the reaction ATP = 3',5'-cyclic AMP + diphosphate. With respect to regulation, activated by the G protein alpha subunit. Activated by the G protein beta and gamma subunit complex. Activated by GNA13 and GNA12. Ethanol and phorbol 12,13-dibutanoate significantly potentiate adenylate cyclase activity generated in response to the activation of the prostanoid receptor by the agonist prostaglandin E1(1-) in a PKC-dependent manner. Inhibited by lithium. Functionally, catalyzes the formation of cAMP in response to activation of G protein-coupled receptors. Functions in signaling cascades activated namely by thrombin and sphingosine 1-phosphate and mediates regulation of cAMP synthesis through synergistic action of the stimulatory G alpha protein with GNA13. Also, during inflammation, mediates zymosan-induced increase intracellular cAMP, leading to protein kinase A pathway activation in order to modulate innate immune responses through heterotrimeric G proteins G(12/13). Functions in signaling cascades activated namely by dopamine and C5 alpha chain and mediates regulation of cAMP synthesis through synergistic action of the stimulatory G protein with G beta:gamma complex. Functions, through cAMP response regulation, to keep inflammation under control during bacterial infection by sensing the presence of serum factors, such as the bioactive lysophospholipid (LPA) that regulate LPS-induced TNF-alpha production. However, it is also required for the optimal functions of B and T cells during adaptive immune responses by regulating cAMP synthesis in both B and T cells. This chain is Adenylate cyclase type 7, found in Mus musculus (Mouse).